A 502-amino-acid polypeptide reads, in one-letter code: ATP synthase subunit alpha (502 aa).

Positions 115-135 are disordered; the sequence is VDGLGPINTTNTRPIESPAPG. 169–176 serves as a coordination point for ATP; that stretch reads GDRQTGKT.

It belongs to the ATPase alpha/beta chains family. In terms of assembly, F-type ATPases have 2 components, CF(1) - the catalytic core - and CF(0) - the membrane proton channel. CF(1) has five subunits: alpha(3), beta(3), gamma(1), delta(1), epsilon(1). CF(0) has three main subunits: a(1), b(2) and c(9-12). The alpha and beta chains form an alternating ring which encloses part of the gamma chain. CF(1) is attached to CF(0) by a central stalk formed by the gamma and epsilon chains, while a peripheral stalk is formed by the delta and b chains.

It localises to the cell membrane. It catalyses the reaction ATP + H2O + 4 H(+)(in) = ADP + phosphate + 5 H(+)(out). In terms of biological role, produces ATP from ADP in the presence of a proton gradient across the membrane. The alpha chain is a regulatory subunit. The protein is ATP synthase subunit alpha of Bacillus mycoides (strain KBAB4) (Bacillus weihenstephanensis).